A 278-amino-acid chain; its full sequence is Manganese import system permease protein ScaB (278 aa).

8 helical membrane passes run 18 to 38, 61 to 81, 94 to 114, 134 to 154, 174 to 194, 196 to 216, 222 to 242, and 246 to 266; these read ALIT…FIIL, ILGI…SIII, TAIG…ISVA, LDMW…SIFF, VNFY…TAMQ, VGTI…YLYA, MILL…FIGY, and VAAG…SFFI.

It belongs to the ABC-3 integral membrane protein family. In terms of assembly, the complex is composed of two ATP-binding proteins (ScaC), two transmembrane proteins (ScaB) and a solute-binding protein (ScaA).

The protein localises to the cell membrane. In terms of biological role, part of the high-affinity ABC transporter complex ScaABC involved in manganese import. Probably responsible for the translocation of the substrate across the membrane. Essential for growth under Mn(2+)-limiting conditions. This chain is Manganese import system permease protein ScaB, found in Streptococcus gordonii.